We begin with the raw amino-acid sequence, 242 residues long: Uridylate kinase (242 aa).

8–11 (KFSG) is an ATP binding site. Gly50 provides a ligand contact to UMP. ATP is bound by residues Gly51 and Arg55. UMP is bound by residues Asp71 and 132–139 (TGNPFFTT). Positions 159, 165, and 168 each coordinate ATP.

It belongs to the UMP kinase family. Homohexamer.

It localises to the cytoplasm. It catalyses the reaction UMP + ATP = UDP + ADP. Its pathway is pyrimidine metabolism; CTP biosynthesis via de novo pathway; UDP from UMP (UMPK route): step 1/1. Inhibited by UTP. Functionally, catalyzes the reversible phosphorylation of UMP to UDP. The protein is Uridylate kinase of Nitratiruptor sp. (strain SB155-2).